The chain runs to 85 residues: Large ribosomal subunit protein bL27 (85 aa).

Positions 1 to 27 (MAHKKAGGSTKNGRDSQSKRLGVKRYG) are disordered.

The protein belongs to the bacterial ribosomal protein bL27 family.

This chain is Large ribosomal subunit protein bL27, found in Halorhodospira halophila (strain DSM 244 / SL1) (Ectothiorhodospira halophila (strain DSM 244 / SL1)).